Consider the following 565-residue polypeptide: Proline--tRNA ligase (565 aa).

Belongs to the class-II aminoacyl-tRNA synthetase family. ProS type 1 subfamily. As to quaternary structure, homodimer.

It is found in the cytoplasm. It carries out the reaction tRNA(Pro) + L-proline + ATP = L-prolyl-tRNA(Pro) + AMP + diphosphate. Its function is as follows. Catalyzes the attachment of proline to tRNA(Pro) in a two-step reaction: proline is first activated by ATP to form Pro-AMP and then transferred to the acceptor end of tRNA(Pro). As ProRS can inadvertently accommodate and process non-cognate amino acids such as alanine and cysteine, to avoid such errors it has two additional distinct editing activities against alanine. One activity is designated as 'pretransfer' editing and involves the tRNA(Pro)-independent hydrolysis of activated Ala-AMP. The other activity is designated 'posttransfer' editing and involves deacylation of mischarged Ala-tRNA(Pro). The misacylated Cys-tRNA(Pro) is not edited by ProRS. This Lactobacillus johnsonii (strain CNCM I-12250 / La1 / NCC 533) protein is Proline--tRNA ligase.